The following is a 293-amino-acid chain: Neugrin (293 aa).

Positions 1–15 (MALSLSLFLGGRVRA) are cleaved as a signal peptide. Disordered stretches follow at residues 25–48 (QGVA…PEER) and 162–211 (PLSA…EKNK). Ser-41 is subject to Phosphoserine. Residue Asn-270 is glycosylated (N-linked (GlcNAc...) asparagine).

Belongs to the neugrin family. Forms a regulatory protein-RNA complex, consisting of RCC1L, NGRN, RPUSD3, RPUSD4, TRUB2, FASTKD2 and 16S mt-rRNA. Interacts with 16S mt-rRNA; this interaction is direct.

It localises to the nucleus. Its subcellular location is the secreted. The protein resides in the mitochondrion membrane. In terms of biological role, plays an essential role in mitochondrial ribosome biogenesis. As a component of a functional protein-RNA module, consisting of RCC1L, NGRN, RPUSD3, RPUSD4, TRUB2, FASTKD2 and 16S mitochondrial ribosomal RNA (16S mt-rRNA), controls 16S mt-rRNA abundance and is required for intra-mitochondrial translation of core subunits of the oxidative phosphorylation system. The protein is Neugrin (Ngrn) of Rattus norvegicus (Rat).